The chain runs to 105 residues: MAEWNGEYVSPYAEHGKKSKQVKKITVSIPLKVLKILTDERTRRQVNNLRHATNSELLCEAFLHAFTGQPLPNDEDLRKERSDEIPEAAKILMRELGVDPDTWEY.

It belongs to the MetJ family. Homodimer.

The protein localises to the cytoplasm. Functionally, this regulatory protein, when combined with SAM (S-adenosylmethionine) represses the expression of the methionine regulon and of enzymes involved in SAM synthesis. This is Met repressor from Yersinia pestis bv. Antiqua (strain Antiqua).